We begin with the raw amino-acid sequence, 348 residues long: Hereditary hemochromatosis protein (348 aa).

A signal peptide spans 1–22 (MGPRARPALLLLMLLQTAVLQG). The alpha-1 stretch occupies residues 23 to 114 (RLLRSHSLHY…IMENHNHSKE (92 aa)). At 23 to 306 (RLLRSHSLHY…WEPSPSGTLV (284 aa)) the chain is on the extracellular side. N-linked (GlcNAc...) asparagine glycosylation is found at Asn-110, Asn-130, and Asn-234. The interval 115-205 (SHTLQVILGC…ELGRGVLDQQ (91 aa)) is alpha-2. Cystine bridges form between Cys-124–Cys-187 and Cys-225–Cys-282. The alpha-3 stretch occupies residues 206–297 (VPPLVKVTHH…GLDQPLIVIW (92 aa)). The Ig-like C1-type domain maps to 207 to 298 (PPLVKVTHHV…LDQPLIVIWE (92 aa)). The connecting peptide stretch occupies residues 298-306 (EPSPSGTLV). Residues 307–330 (IGVISGIAVFVVILFIGILFIILR) traverse the membrane as a helical segment. The Cytoplasmic portion of the chain corresponds to 331 to 348 (KRQGSRGAMGHYVLAERE).

The protein belongs to the MHC class I family. As to quaternary structure, binds TFR through the extracellular domain in a pH-dependent manner. As to expression, expressed in all tissues tested except brain.

It localises to the cell membrane. In terms of biological role, binds to transferrin receptor (TFR) and reduces its affinity for iron-loaded transferrin. This is Hereditary hemochromatosis protein (HFE) from Homo sapiens (Human).